Consider the following 373-residue polypeptide: Stationary phase protein 5 (373 aa).

In terms of biological role, required for survival at high temperature during stationary phase. The sequence is that of Stationary phase protein 5 (SPG5) from Saccharomyces cerevisiae (strain ATCC 204508 / S288c) (Baker's yeast).